The chain runs to 821 residues: Protein EFR3 homolog A (821 aa).

Phosphoserine occurs at positions 360, 363, 422, and 694.

This sequence belongs to the EFR3 family. As to quaternary structure, component of a phosphatidylinositol 4-kinase (PI4K) complex, composed of PI4KA, EFR3 (EFR3A or EFR3B), TTC7 (TTC7A or TTC7B) and HYCC (HYCC1 or HYCC2). Post-translationally, palmitoylated at its N-terminus, anchoring the protein to the plasma membrane.

Its subcellular location is the cell membrane. The protein resides in the cytoplasm. The protein localises to the cytosol. Its function is as follows. Component of a complex required to localize phosphatidylinositol 4-kinase (PI4K) to the plasma membrane. The complex acts as a regulator of phosphatidylinositol 4-phosphate (PtdIns(4)P) synthesis. In the complex, EFR3A probably acts as the membrane-anchoring component. Also involved in responsiveness to G-protein-coupled receptors; it is however unclear whether this role is direct or indirect. The chain is Protein EFR3 homolog A from Homo sapiens (Human).